The chain runs to 101 residues: U1-sicaritoxin-Li1a (101 aa).

A signal peptide spans 1–19 (MRFLVGAVLVVVLVACATA). A propeptide spanning residues 20–35 (FESDAETFKSLVVEER) is cleaved from the precursor. Intrachain disulfides connect C37–C54, C45–C59, C53–C72, and C61–C70. A Lysine amide modification is found at K81. A propeptide spanning residues 85 to 101 (ALLLPVETHRLLFPEQW) is cleaved from the precursor.

The protein belongs to the neurotoxin 28 (Litx) family. As to expression, expressed by the venom gland.

The protein resides in the secreted. Toxin active against insects (S.frugiperda larvae). May act on sodium (Nav) or calcium channels (Cav). This chain is U1-sicaritoxin-Li1a, found in Loxosceles intermedia (Brown spider).